The chain runs to 206 residues: Imidazole glycerol phosphate synthase subunit HisH (206 aa).

In terms of domain architecture, Glutamine amidotransferase type-1 spans 1 to 206 (MIVIIDYGMG…LRILKNFGDM (206 aa)). Catalysis depends on Cys79, which acts as the Nucleophile. Catalysis depends on residues His188 and Glu190.

As to quaternary structure, heterodimer of HisH and HisF.

Its subcellular location is the cytoplasm. It catalyses the reaction 5-[(5-phospho-1-deoxy-D-ribulos-1-ylimino)methylamino]-1-(5-phospho-beta-D-ribosyl)imidazole-4-carboxamide + L-glutamine = D-erythro-1-(imidazol-4-yl)glycerol 3-phosphate + 5-amino-1-(5-phospho-beta-D-ribosyl)imidazole-4-carboxamide + L-glutamate + H(+). It carries out the reaction L-glutamine + H2O = L-glutamate + NH4(+). The protein operates within amino-acid biosynthesis; L-histidine biosynthesis; L-histidine from 5-phospho-alpha-D-ribose 1-diphosphate: step 5/9. IGPS catalyzes the conversion of PRFAR and glutamine to IGP, AICAR and glutamate. The HisH subunit catalyzes the hydrolysis of glutamine to glutamate and ammonia as part of the synthesis of IGP and AICAR. The resulting ammonia molecule is channeled to the active site of HisF. This chain is Imidazole glycerol phosphate synthase subunit HisH, found in Syntrophotalea carbinolica (strain DSM 2380 / NBRC 103641 / GraBd1) (Pelobacter carbinolicus).